The following is a 93-amino-acid chain: Small ribosomal subunit protein uS17 (93 aa).

Belongs to the universal ribosomal protein uS17 family. As to quaternary structure, part of the 30S ribosomal subunit.

One of the primary rRNA binding proteins, it binds specifically to the 5'-end of 16S ribosomal RNA. The polypeptide is Small ribosomal subunit protein uS17 (Corynebacterium kroppenstedtii (strain DSM 44385 / JCM 11950 / CIP 105744 / CCUG 35717)).